Consider the following 370-residue polypeptide: MEDLKVTPLRGVYEEYGGKIVDFAGYELPTQFKGFLHEHHTVREKAGLFDVSHMGEAMVTGKDAGKFIQYLMTNDINVLKDNEVLYTFMCNEDGGVIDDLLVYKFAGDEFFLVINASNKDKDVKWIMGHKGDFDVEIVDVSDSIAQLAFQGPLAEEILQKIVDVDLQEIKFFKLKRDVLVDGKKCLVSRTGYTGEDGFEIYCKPEDAKGLWHAILNAGKEEGAQPIGLGARDTLRFEASLLLYGNEMDETITPLEVGMGFFVKLKVEEDFIGKDALIKQKAEGITRKLVGFELLDKGIPRHGYEVIKDGKVIGHVTTGYKSPTLNKAIGLALVEEQYSKIGTEFNIKVRKKELKAVAIDKRFYTKKTKTK.

It belongs to the GcvT family. The glycine cleavage system is composed of four proteins: P, T, L and H.

The enzyme catalyses N(6)-[(R)-S(8)-aminomethyldihydrolipoyl]-L-lysyl-[protein] + (6S)-5,6,7,8-tetrahydrofolate = N(6)-[(R)-dihydrolipoyl]-L-lysyl-[protein] + (6R)-5,10-methylene-5,6,7,8-tetrahydrofolate + NH4(+). The glycine cleavage system catalyzes the degradation of glycine. This is Aminomethyltransferase from Clostridium botulinum (strain Langeland / NCTC 10281 / Type F).